We begin with the raw amino-acid sequence, 46 residues long: Mu-hexatoxin-Mg2a (46 aa).

Disulfide bonds link Cys3–Cys18, Cys10–Cys24, Cys17–Cys36, Cys21–Cys43, and Cys26–Cys34.

The protein belongs to the neurotoxin 02 (plectoxin) family. 02 (plectoxin) subfamily. In terms of tissue distribution, expressed by the venom gland.

The protein resides in the secreted. Functionally, competes for binding at site 3 of the insect voltage-gated sodium channel (Nav). Insecticidal neurotoxin. Causes temporary paralysis to lepidopteran larvae (10.3 nmol/g) or to crickets (doses from 0.93 to 119 ug/g). Is not toxic to mice when injected intracranially (high doses). This is Mu-hexatoxin-Mg2a from Macrothele gigas (Japanese funnel web spider).